We begin with the raw amino-acid sequence, 375 residues long: Succinyl-diaminopimelate desuccinylase (375 aa).

Histidine 66 is a binding site for Zn(2+). Aspartate 68 is an active-site residue. Aspartate 99 lines the Zn(2+) pocket. Glutamate 133 (proton acceptor) is an active-site residue. Positions 134, 162, and 348 each coordinate Zn(2+).

This sequence belongs to the peptidase M20A family. DapE subfamily. As to quaternary structure, homodimer. Zn(2+) is required as a cofactor. Requires Co(2+) as cofactor.

It carries out the reaction N-succinyl-(2S,6S)-2,6-diaminopimelate + H2O = (2S,6S)-2,6-diaminopimelate + succinate. It functions in the pathway amino-acid biosynthesis; L-lysine biosynthesis via DAP pathway; LL-2,6-diaminopimelate from (S)-tetrahydrodipicolinate (succinylase route): step 3/3. Functionally, catalyzes the hydrolysis of N-succinyl-L,L-diaminopimelic acid (SDAP), forming succinate and LL-2,6-diaminopimelate (DAP), an intermediate involved in the bacterial biosynthesis of lysine and meso-diaminopimelic acid, an essential component of bacterial cell walls. This chain is Succinyl-diaminopimelate desuccinylase, found in Aeromonas salmonicida (strain A449).